The primary structure comprises 244 residues: 14-3-3 protein beta/alpha (244 aa).

Methionine 1 is subject to N-acetylmethionine. A Phosphoserine modification is found at serine 184.

This sequence belongs to the 14-3-3 family. In terms of assembly, homodimer, and heterodimer with other family members. In terms of processing, phosphorylated.

It is found in the cytoplasm. Adapter protein implicated in the regulation of a large spectrum of both general and specialized signaling pathways. Binds to a large number of partners, usually by recognition of a phosphoserine or phosphothreonine motif. Binding generally results in the modulation of the activity of the binding partner. This chain is 14-3-3 protein beta/alpha (YWHAB), found in Gallus gallus (Chicken).